A 509-amino-acid chain; its full sequence is Histidine ammonia-lyase (509 aa).

The 5-imidazolinone (Ala-Gly) cross-link spans 144–146; that stretch reads ASG. Residue S145 is modified to 2,3-didehydroalanine (Ser).

It belongs to the PAL/histidase family. In terms of processing, contains an active site 4-methylidene-imidazol-5-one (MIO), which is formed autocatalytically by cyclization and dehydration of residues Ala-Ser-Gly.

The protein localises to the cytoplasm. The catalysed reaction is L-histidine = trans-urocanate + NH4(+). Its pathway is amino-acid degradation; L-histidine degradation into L-glutamate; N-formimidoyl-L-glutamate from L-histidine: step 1/3. The sequence is that of Histidine ammonia-lyase from Pseudoalteromonas atlantica (strain T6c / ATCC BAA-1087).